We begin with the raw amino-acid sequence, 89 residues long: Small ribosomal subunit protein uS14 (89 aa).

This sequence belongs to the universal ribosomal protein uS14 family. In terms of assembly, part of the 30S ribosomal subunit. Contacts proteins S3 and S10.

Its function is as follows. Binds 16S rRNA, required for the assembly of 30S particles and may also be responsible for determining the conformation of the 16S rRNA at the A site. The polypeptide is Small ribosomal subunit protein uS14 (Chlorobium luteolum (strain DSM 273 / BCRC 81028 / 2530) (Pelodictyon luteolum)).